A 646-amino-acid polypeptide reads, in one-letter code: MADAVAEAVAKLVLDDETGEMVTKNELKKRIQKRARKAAAAANRSNAQQEKGNKPAANKPAAKPEERVIDPDAMFKQGFLGDVFKLRPEESVVTRFPPEPNGYLHLGHAKAIAVNFGFAKYHGGRTQQQLDGQINYIPTDVADSRFDDTNPDAEKGEYFVAIEDTIRWLGFTPSEITYASDNYQRMYDLAEELIKMEKAYVCHCDDVETKKQRGGEDGLFPRYRCEHAKQDVETNLKKFRGMRDGEYAPRSAWLRMKQDIENNPNPQMWDLAAYRIPKDQEPHFRTGTKWRIYPTYDFAHCLCDSFEGITHSLCTTEFIMSRESYEWLNKLLVEFQPMQREYGRLNLSGTIMSKRGLRTLIENNVVRGWDDPRLYTIKGIRRRGIPPGALLSFIYELGVTTSITQVSIKRFEQSIRVYLEKTVPRLMLVLDPVPVVIEDGEEQDLDIPFSPKDPKLGSHTIRLTKTVYIDRSDFREVDSKDYFRLAPGKTVGLLNVPYPIKAVSFTKDETTGAIKEIKAVYDKEGKKPKTYIQWVPEGSLPAEVRIHEALFKSDSPGSAPGGLLSDVNPNSETIWPNALIETGFHEVKRRAPWPEAEGEKTGEFHPETVRFQAMRVAYFALDSDSTDEKIVLNRIVPLKEDSGKSS.

Residues 25 to 65 (NELKKRIQKRARKAAAAANRSNAQQEKGNKPAANKPAAKPE) are disordered. Residues 38 to 61 (AAAAANRSNAQQEKGNKPAANKPA) show a composition bias toward low complexity. A 'HIGH' region motif is present at residues 98 to 108 (PEPNGYLHLGH). ATP contacts are provided by residues 99 to 101 (EPN) and 105 to 111 (HLGHAKA). L-glutamine-binding residues include Asp-147 and Tyr-296. Residues Thr-315, 344 to 345 (RL), and 352 to 354 (MSK) contribute to the ATP site. A 'KMSKS' region motif is present at residues 351 to 355 (IMSKR).

This sequence belongs to the class-I aminoacyl-tRNA synthetase family.

The catalysed reaction is tRNA(Gln) + L-glutamine + ATP = L-glutaminyl-tRNA(Gln) + AMP + diphosphate. Functionally, glutamine--tRNA ligase; part of the gene cluster that mediates the biosynthesis of virensols and trichoxide, fungal natural products that contain or are derived from a salicylaldehyde core. VirJ does not seem to play any role in virensols and trichoxide biosynthesis. This chain is Glutamine--tRNA ligase protein virJ, found in Hypocrea virens (strain Gv29-8 / FGSC 10586) (Gliocladium virens).